Consider the following 261-residue polypeptide: Lys-63-specific deubiquitinase BRCC36 (261 aa).

The region spanning 6–149 (VHIQGDAFLV…YTCFQSVQAQ (144 aa)) is the MPN domain. Zn(2+) is bound by residues His92, His94, and Asp105. The JAMM motif motif lies at 92–105 (HSHPHITVWPSHVD).

This sequence belongs to the peptidase M67A family. BRCC36 subfamily. As to quaternary structure, component of the BRCA1-A complex, at least composed of brca1, bard1, uimc1/rap80, abraxas1, brcc3/brcc36, babam2 and babam1/nba1. In the BRCA1-A complex, interacts directly with abraxas1 and babam2. Component of the BRISC complex, at least composed of abraxas2, brcc3/brcc36, babam2 and babam1/nba1. Within the complex, interacts directly with abraxas2. Both the BRCA1-A complex and the BRISC complex bind polyubiquitin. Requires Zn(2+) as cofactor.

Its subcellular location is the nucleus. The protein resides in the cytoplasm. It is found in the cytoskeleton. The protein localises to the spindle pole. Its function is as follows. Metalloprotease that specifically cleaves 'Lys-63'-linked polyubiquitin chains. Does not have activity toward 'Lys-48'-linked polyubiquitin chains. Component of the BRCA1-A complex, a complex that specifically recognizes 'Lys-63'-linked ubiquitinated histones H2A and H2AX at DNA lesions sites, leading to target the brca1-bard1 heterodimer to sites of DNA damage at double-strand breaks (DSBs). In the BRCA1-A complex, it specifically removes 'Lys-63'-linked ubiquitin on histones H2A and H2AX, antagonizing the rnf8-dependent ubiquitination at double-strand breaks (DSBs). Catalytic subunit of the BRISC complex, a multiprotein complex that specifically cleaves 'Lys-63'-linked ubiquitin in various substrates. Mediates the specific 'Lys-63'-specific deubiquitination associated with the COP9 signalosome complex (CSN), via the interaction of the BRISC complex with the CSN complex. The BRISC complex is required for normal mitotic spindle assembly and microtubule attachment to kinetochores via its role in deubiquitinating numa1. Plays a role in interferon signaling via its role in the deubiquitination of the interferon receptor ifnar1; deubiquitination increases ifnar1 activity by enhancing its stability and cell surface expression. Acts as a regulator of the NLRP3 inflammasome by mediating deubiquitination of nlrp3. Down-regulates the response to bacterial lipopolysaccharide (LPS) via its role in ifnar1 deubiquitination. The sequence is that of Lys-63-specific deubiquitinase BRCC36 (brcc3) from Xenopus tropicalis (Western clawed frog).